The sequence spans 243 residues: UPF0758 protein MAE_44350 (243 aa).

The MPN domain occupies 113 to 235 (VIDSPDTAAA…FQSLRQITDL (123 aa)). Zn(2+) contacts are provided by His-184, His-186, and Asp-197. The JAMM motif motif lies at 184–197 (HNHPTGSLVPSQDD).

This sequence belongs to the UPF0758 family.

In Microcystis aeruginosa (strain NIES-843 / IAM M-2473), this protein is UPF0758 protein MAE_44350.